Reading from the N-terminus, the 113-residue chain is CRISPR-associated endoribonuclease Cas2 (113 aa).

Position 33 (D33) interacts with Mg(2+).

It belongs to the CRISPR-associated endoribonuclease Cas2 protein family. As to quaternary structure, homodimer, forms a heterotetramer with a Cas1 homodimer. The cofactor is Mg(2+).

CRISPR (clustered regularly interspaced short palindromic repeat), is an adaptive immune system that provides protection against mobile genetic elements (viruses, transposable elements and conjugative plasmids). CRISPR clusters contain sequences complementary to antecedent mobile elements and target invading nucleic acids. CRISPR clusters are transcribed and processed into CRISPR RNA (crRNA). Functions as a ssRNA-specific endoribonuclease. Involved in the integration of spacer DNA into the CRISPR cassette. The type III-A Csm effector complex binds crRNA and acts as a crRNA-guided RNase, DNase and cyclic oligoadenylate synthase; binding of target RNA cognate to the crRNA is required for all activities. This chain is CRISPR-associated endoribonuclease Cas2, found in Mycobacterium tuberculosis (strain CDC 1551 / Oshkosh).